The sequence spans 171 residues: 3-hydroxydecanoyl-[acyl-carrier-protein] dehydratase (171 aa).

His70 is an active-site residue.

Belongs to the thioester dehydratase family. FabA subfamily. As to quaternary structure, homodimer.

The protein localises to the cytoplasm. The catalysed reaction is a (3R)-hydroxyacyl-[ACP] = a (2E)-enoyl-[ACP] + H2O. The enzyme catalyses (3R)-hydroxydecanoyl-[ACP] = (2E)-decenoyl-[ACP] + H2O. It carries out the reaction (2E)-decenoyl-[ACP] = (3Z)-decenoyl-[ACP]. The protein operates within lipid metabolism; fatty acid biosynthesis. Necessary for the introduction of cis unsaturation into fatty acids. Catalyzes the dehydration of (3R)-3-hydroxydecanoyl-ACP to E-(2)-decenoyl-ACP and then its isomerization to Z-(3)-decenoyl-ACP. Can catalyze the dehydratase reaction for beta-hydroxyacyl-ACPs with saturated chain lengths up to 16:0, being most active on intermediate chain length. The protein is 3-hydroxydecanoyl-[acyl-carrier-protein] dehydratase of Shewanella putrefaciens (strain CN-32 / ATCC BAA-453).